Reading from the N-terminus, the 2023-residue chain is Protein Daple (2023 aa).

Residues asparagine 11 to alanine 131 form the Calponin-homology (CH) domain. Coiled-coil stretches lie at residues arginine 250–glutamate 415, asparagine 458–asparagine 1064, and leucine 1105–phenylalanine 1419. Residues arginine 1013–proline 1035 form a disordered region. A compositionally biased stretch (polar residues) spans glutamate 1022 to serine 1033. Disordered stretches follow at residues lysine 1441–serine 1824 and leucine 1837–valine 2023. Basic and acidic residues predominate over residues proline 1442–serine 1460. Over residues serine 1478–glutamine 1491 the composition is skewed to pro residues. Polar residues-rich tracts occupy residues aspartate 1497 to alanine 1518 and threonine 1564 to leucine 1585. Low complexity-rich tracts occupy residues serine 1623–leucine 1643 and arginine 1667–serine 1704. The GBA motif lies at serine 1700–serine 1728. Composition is skewed to polar residues over residues glutamine 1714–glycine 1727, threonine 1752–threonine 1763, leucine 1785–proline 1799, and alanine 1809–serine 1824. The segment covering valine 1890–phenylalanine 1904 has biased composition (basic and acidic residues). The span at glycine 1927–glycine 1945 shows a compositional bias: low complexity. Residues glutamine 1974–aspartate 1988 show a composition bias toward basic and acidic residues. Positions threonine 1989–glutamine 2014 are enriched in polar residues. Residues tyrosine 2020–valine 2023 carry the PDZ-binding motif.

Belongs to the CCDC88 family.

Its subcellular location is the cytoplasm. It localises to the cell junction. Positive regulator of Wnt signaling, acting synergistically with dvl2. Functions upstream of ctnnb1/beta-catenin in the canonical Wnt pathway, and also activates jnk in the Wnt/planar cell polarity (PCP) pathway. Acts as a non-receptor guanine nucleotide exchange factor which binds to and activates guanine nucleotide-binding protein G(i) alpha (Gi-alpha) subunits. This promotes apical cell constriction and subsequent bending of the neural plate during neurulation via arhgef18. In Danio rerio (Zebrafish), this protein is Protein Daple.